Here is a 639-residue protein sequence, read N- to C-terminus: MGKIIGIDLGTTNSCVAVLDGGKARVLENAEGDRTTPSIIAYTDDETIVGSPAKRQAVTNPTNTFFAIKRLIGRRFKDDEVQRDVNIMPFKIIAADNGDAWVESRGNKMAPPQVSAEILKKMKKTAEDFLGEEVTEAVITVPAYFNDSQRQATKDAGRIAGLDVKRIINEPTAAALAYGIDKKQGDNIVAVYDLGGGTFDISIIEIDSNDGDQTFEVLATNGDTHLGGEDFDNRLINYLADEFKKEQGLDLRKDPLAMQRLKEAAEKAKIELSSTNHTEVNLPYITADATGPKHLVIKITRAKLESLVEDLIIRTLEPLKVALADADLSVTDINEVILVGGQTRMPKVQEAVTNFFGKEPRKDVNPDEAVAVGAAIQAGVLSGDVKDVLLLDVTPLSLGIETMGSVMTKLIEKNTTIPTKAQQVFSTADDNQSAVTIHVLQGERKQASANKSLGQFNLDGIEPAQRGQPQIEVMFDIDADGILHVSATDKKTGKKQNITIKASSGLSEEEVAQMVRDAEAHADEDKKFEELVQSRNQADGLVHATKKQVEEAGDALPSEDKEKIQAAMDAVDTAIKGNDKEAIEKATQELIEASAKLMEIAQAKSQAQGGDNADAGKQANATADDVVDAEFEEVKDDKK.

A Phosphothreonine; by autocatalysis modification is found at Thr-198. Positions 602 to 639 (QAKSQAQGGDNADAGKQANATADDVVDAEFEEVKDDKK) are disordered. A compositionally biased stretch (acidic residues) spans 625-639 (DVVDAEFEEVKDDKK).

Belongs to the heat shock protein 70 family.

Functionally, acts as a chaperone. This Shewanella baltica (strain OS195) protein is Chaperone protein DnaK.